The following is a 633-amino-acid chain: 1-deoxy-D-xylulose-5-phosphate synthase (633 aa).

Residues histidine 72 and 113–115 (GHS) contribute to the thiamine diphosphate site. Aspartate 144 provides a ligand contact to Mg(2+). Thiamine diphosphate contacts are provided by residues 145–146 (GA), asparagine 173, tyrosine 284, and glutamate 367. Asparagine 173 contributes to the Mg(2+) binding site.

The protein belongs to the transketolase family. DXPS subfamily. As to quaternary structure, homodimer. Requires Mg(2+) as cofactor. The cofactor is thiamine diphosphate.

The catalysed reaction is D-glyceraldehyde 3-phosphate + pyruvate + H(+) = 1-deoxy-D-xylulose 5-phosphate + CO2. It functions in the pathway metabolic intermediate biosynthesis; 1-deoxy-D-xylulose 5-phosphate biosynthesis; 1-deoxy-D-xylulose 5-phosphate from D-glyceraldehyde 3-phosphate and pyruvate: step 1/1. Catalyzes the acyloin condensation reaction between C atoms 2 and 3 of pyruvate and glyceraldehyde 3-phosphate to yield 1-deoxy-D-xylulose-5-phosphate (DXP). This chain is 1-deoxy-D-xylulose-5-phosphate synthase, found in Bacillus velezensis (strain DSM 23117 / BGSC 10A6 / LMG 26770 / FZB42) (Bacillus amyloliquefaciens subsp. plantarum).